The following is a 685-amino-acid chain: Probable transketolase (685 aa).

A substrate-binding site is contributed by His32. Thiamine diphosphate-binding positions include His72 and 121 to 123; that span reads GPL. Asp162 serves as a coordination point for Mg(2+). Residues Gly163 and Asn192 each contribute to the thiamine diphosphate site. Positions 192 and 194 each coordinate Mg(2+). His268, Arg363, and Ser390 together coordinate substrate. His268 contacts thiamine diphosphate. Residues Glu422 and Phe448 each coordinate thiamine diphosphate. Glu422 (proton donor) is an active-site residue. His472, Asp480, and Arg531 together coordinate substrate.

Belongs to the transketolase family. Homodimer. Mg(2+) is required as a cofactor. Ca(2+) serves as cofactor. It depends on Mn(2+) as a cofactor. Requires Co(2+) as cofactor. The cofactor is thiamine diphosphate.

It carries out the reaction D-sedoheptulose 7-phosphate + D-glyceraldehyde 3-phosphate = aldehydo-D-ribose 5-phosphate + D-xylulose 5-phosphate. Its function is as follows. Catalyzes the transfer of a two-carbon ketol group from a ketose donor to an aldose acceptor, via a covalent intermediate with the cofactor thiamine pyrophosphate. The polypeptide is Probable transketolase (Schizosaccharomyces pombe (strain 972 / ATCC 24843) (Fission yeast)).